The chain runs to 108 residues: Peptidyl-prolyl cis-trans isomerase FKBP1B (108 aa).

Positions 20–108 (GQICVVHYTG…IFDVELLNLE (89 aa)) constitute a PPIase FKBP-type domain.

It belongs to the FKBP-type PPIase family. FKBP1 subfamily. In terms of assembly, identified in a complex composed of RYR2, FKBP1B, PKA catalytic subunit, PRKAR2A, AKAP6, and the protein phosphatases PP2A and PP1. Interacts directly with RYR2. In terms of tissue distribution, detected in heart muscle (at protein level). Ubiquitous.

It is found in the cytoplasm. The protein localises to the sarcoplasmic reticulum. The catalysed reaction is [protein]-peptidylproline (omega=180) = [protein]-peptidylproline (omega=0). With respect to regulation, inhibited by both FK506 and rapamycin. Functionally, has the potential to contribute to the immunosuppressive and toxic effects of FK506 and rapamycin. PPIases accelerate the folding of proteins. It catalyzes the cis-trans isomerization of proline imidic peptide bonds in oligopeptides. In Rattus norvegicus (Rat), this protein is Peptidyl-prolyl cis-trans isomerase FKBP1B (Fkbp1b).